We begin with the raw amino-acid sequence, 718 residues long: K(+)-insensitive pyrophosphate-energized proton pump (718 aa).

The next 6 helical transmembrane spans lie at 6 to 26 (AVLVLVIACGVVSVLFAIWAI), 54 to 76 (LTRQYSTIAIVGVVVFLAAWYLL), 81 to 103 (AIGFLIGAVLSGVTGFIGMHVSV), 112 to 132 (AASLSLAGGLELAFKSGAITG), 133 to 153 (LLVAGLALLGVSVYYFILTVW), and 168 to 188 (VSLGFGASLISIFARLGGGIF). Residue lysine 190 participates in substrate binding. Mg(2+) contacts are provided by aspartate 193, aspartate 197, asparagine 220, and aspartate 223. The next 6 membrane-spanning stretches (helical) occupy residues 240–260 (AVTVVATMVLGAIFFNGSDIL), 265–285 (LYPLMICGACVITSIVGTFFV), 300–320 (GLIATGLLSIVGLAIANTLTV), 335–355 (GTNLFLCGLIGLIVTGLIVVI), 385–405 (GLAVSLESTALPAIVIVGGII), and 413–433 (LFGTAIAVTAMLGIAGMIVAL). Aspartate 441 is a binding site for Mg(2+). The next 4 membrane-spanning stretches (helical) occupy residues 472 to 492 (AVTKGYAIGSAGLGALVLFAA), 524 to 544 (YVVAGLIFGGLIPYLFGGMAM), 593 to 613 (IIPSLLPVLAPIVVYFGVLLI), and 620 to 640 (AFAALGASLLGVIVNGLFVAI). Ca(2+) contacts are provided by aspartate 650, aspartate 682, and aspartate 686. Lysine 689 contributes to the substrate binding site. The helical transmembrane segment at 695 to 715 (AVNPAIKITNIVALLLLAVLA) threads the bilayer.

The protein belongs to the H(+)-translocating pyrophosphatase (TC 3.A.10) family. K(+)-insensitive subfamily. As to quaternary structure, homodimer. It depends on Mg(2+) as a cofactor.

The protein resides in the cell inner membrane. It carries out the reaction diphosphate + H2O + H(+)(in) = 2 phosphate + 2 H(+)(out). Proton pump that utilizes the energy of pyrophosphate hydrolysis as the driving force for proton movement across the membrane. Generates a proton motive force. This Brucella anthropi (strain ATCC 49188 / DSM 6882 / CCUG 24695 / JCM 21032 / LMG 3331 / NBRC 15819 / NCTC 12168 / Alc 37) (Ochrobactrum anthropi) protein is K(+)-insensitive pyrophosphate-energized proton pump.